We begin with the raw amino-acid sequence, 310 residues long: Glycine--tRNA ligase alpha subunit (310 aa).

This sequence belongs to the class-II aminoacyl-tRNA synthetase family. Tetramer of two alpha and two beta subunits.

The protein resides in the cytoplasm. The enzyme catalyses tRNA(Gly) + glycine + ATP = glycyl-tRNA(Gly) + AMP + diphosphate. This Agrobacterium fabrum (strain C58 / ATCC 33970) (Agrobacterium tumefaciens (strain C58)) protein is Glycine--tRNA ligase alpha subunit.